We begin with the raw amino-acid sequence, 473 residues long: 6-phospho-beta-glucosidase (473 aa).

Residue Glu-174 is the Proton donor of the active site. Glu-366 functions as the Nucleophile in the catalytic mechanism.

The protein belongs to the glycosyl hydrolase 1 family.

The enzyme catalyses 6-phospho-beta-D-glucosyl-(1-&gt;4)-D-glucose + H2O = D-glucose 6-phosphate + D-glucose. The protein is 6-phospho-beta-glucosidase (abgA) of Clostridium longisporum.